Here is an 802-residue protein sequence, read N- to C-terminus: Copper-exporting P-type ATPase (802 aa).

2 consecutive HMA domains span residues 5–70 (KKTT…YGVT) and 72–138 (ETVE…YDAS). The Cu(+) site is built by cysteine 16, cysteine 19, cysteine 83, and cysteine 86. Helical transmembrane passes span 161–181 (LIISAVLSLPLLMLMFVHLFN), 192–212 (WFQFILATPVQFIIGWQFYVG), 224–244 (MDVLVAVGTSAAYFYSIYEMV), 256–276 (LYFETSAVLLTLILFGKYLEA), 411–431 (YFVPIVVGIALLIFIVWITLV), and 438–458 (PALVASISVLVIACPCALGLA). Aspartate 495 acts as the 4-aspartylphosphate intermediate in catalysis. Mg(2+) contacts are provided by aspartate 690 and aspartate 694. Transmembrane regions (helical) follow at residues 748 to 767 (LFWAFGYNIAGIPIAALGLL) and 771 to 790 (VAGAAMALSSVSVVTNALRL).

This sequence belongs to the cation transport ATPase (P-type) (TC 3.A.3) family. Type IB subfamily.

Its subcellular location is the cell membrane. The catalysed reaction is Cu(+)(in) + ATP + H2O = Cu(+)(out) + ADP + phosphate + H(+). Its function is as follows. Involved in copper export. In Staphylococcus aureus (strain N315), this protein is Copper-exporting P-type ATPase (copA).